Reading from the N-terminus, the 148-residue chain is UPF0758 protein YeeS (148 aa).

Positions 26–148 (AFTSTRAARE…VFSFAEHGLL (123 aa)) constitute an MPN domain. 3 residues coordinate Zn(2+): histidine 97, histidine 99, and aspartate 110. The short motif at 97–110 (HNHPSGEVTPSKAD) is the JAMM motif element.

The protein belongs to the UPF0758 family.

This Escherichia coli (strain K12) protein is UPF0758 protein YeeS (yeeS).